The sequence spans 274 residues: Large ribosomal subunit protein uL2 (274 aa).

The segment at 223 to 258 (VAMNPVDHPHGGGEGRTSGGRHPVTPWGIPTKGYKT) is disordered.

This sequence belongs to the universal ribosomal protein uL2 family. Part of the 50S ribosomal subunit. Forms a bridge to the 30S subunit in the 70S ribosome.

Functionally, one of the primary rRNA binding proteins. Required for association of the 30S and 50S subunits to form the 70S ribosome, for tRNA binding and peptide bond formation. It has been suggested to have peptidyltransferase activity; this is somewhat controversial. Makes several contacts with the 16S rRNA in the 70S ribosome. The protein is Large ribosomal subunit protein uL2 of Pelobacter propionicus (strain DSM 2379 / NBRC 103807 / OttBd1).